The primary structure comprises 67 residues: DNA-directed RNA polymerase subunit omega (67 aa).

This sequence belongs to the RNA polymerase subunit omega family. The RNAP catalytic core consists of 2 alpha, 1 beta, 1 beta' and 1 omega subunit. When a sigma factor is associated with the core the holoenzyme is formed, which can initiate transcription.

The catalysed reaction is RNA(n) + a ribonucleoside 5'-triphosphate = RNA(n+1) + diphosphate. Its function is as follows. Promotes RNA polymerase assembly. Latches the N- and C-terminal regions of the beta' subunit thereby facilitating its interaction with the beta and alpha subunits. This is DNA-directed RNA polymerase subunit omega from Paracidovorax citrulli (strain AAC00-1) (Acidovorax citrulli).